The chain runs to 1497 residues: Collagen alpha-1(XVII) chain (1497 aa).

2 disordered regions span residues 1–154 and 167–186; these read MDVT…PSTR and GSRS…LPIP. The Cytoplasmic segment spans residues 1–467; sequence MDVTKKNKRD…CGSCCSWWKW (467 aa). The interval 1 to 566 is nonhelical region (NC16); it reads MDVTKKNKRD…MMEQENGNLR (566 aa). Over residues 9–19 the composition is skewed to basic and acidic residues; sequence RDGTEVTERIV. 2 stretches are compositionally biased toward polar residues: residues 57-96 and 169-183; these read LTHG…SPGS and RSAS…SNTL. The interval 145–230 is necessary for interaction with DST and for the recruitment of DST to hemidesmosome; the sequence is RLQSASPSTR…WSSTLPAGSS (86 aa). The helical; Signal-anchor for type II membrane protein transmembrane segment at 468–488 threads the bilayer; that stretch reads LLGLLLTWLLLLGLLFGLIAL. Residues 489-1497 are Extracellular-facing; the sequence is AEEVRKLKAR…RRRRSIAVKP (1009 aa). Residue serine 544 is modified to Phosphoserine; by CK2. Disordered regions lie at residues 562 to 1011, 1209 to 1234, and 1261 to 1316; these read NGNL…SSSG, GLSF…VSGA, and SFIV…TGGG. The triple-helical region stretch occupies residues 567 to 1482; sequence GSPGPKGDMG…KGEKGDKGDQ (916 aa). A compositionally biased stretch (pro residues) spans 590-602; the sequence is PGIPGPLGHPGPQ. 4 stretches are compositionally biased toward low complexity: residues 604–635, 661–673, 735–748, and 774–796; these read PKGQ…RGEA, PGSV…SGSP, EPGA…AGPD, and DPGK…PGRP. Composition is skewed to pro residues over residues 820-841, 858-881, and 907-916; these read PGPP…PGPA, PPGP…PRGP, and PPGPPGPPGP. Low complexity-rich tracts occupy residues 936–946 and 968–987; these read GFSTSGSSSFG and PGVP…GSSS. Composition is skewed to pro residues over residues 994-1004, 1214-1228, and 1266-1275; these read PPGPPGPPGPP, PGPP…PRGP, and PPGPPGPQGP. Residues 1289-1312 are compositionally biased toward low complexity; it reads SRGSSSSSHSSSVRRGSSYSSSMS. Residue asparagine 1421 is glycosylated (N-linked (GlcNAc...) asparagine). The tract at residues 1434–1497 is disordered; it reads GAIQGPPGQK…RRRRSIAVKP (64 aa). Residues 1458–1469 are compositionally biased toward pro residues; sequence AGPPGHPGPPGP. Positions 1472–1481 are enriched in basic and acidic residues; that stretch reads HKGEKGDKGD. The nonhelical region (NC1) stretch occupies residues 1483 to 1497; the sequence is VYAGRRRRRSIAVKP. The span at 1486 to 1497 shows a compositional bias: basic residues; sequence GRRRRRSIAVKP.

In terms of assembly, homotrimers of alpha 1(XVII)chains. Interacts (via cytoplasmic region) with ITGB4 (via cytoplasmic region). Interacts (via cytoplasmic region) with DST isoform 3 (via N-terminus). Interacts (via N-terminus) with PLEC. Interacts (via cytoplasmic region) with DSP. In terms of processing, the intracellular/endo domain is disulfide-linked. Prolines at the third position of the tripeptide repeating unit (G-X-Y) are hydroxylated in some or all of the chains. Post-translationally, the ectodomain is shedded from the surface of keratinocytes resulting in a 120-kDa soluble form, also named as 120 kDa linear IgA disease antigen. The shedding is mediated by membrane-bound metalloproteases. This cleavage is inhibited by phosphorylation at Ser-544. In terms of tissue distribution, detected in skin. In the cornea, it is detected in the epithelial basement membrane, the epithelial cells, and at a lower level in stromal cells (at protein level). Stratified squamous epithelia. Found in hemidesmosomes. Expressed in cornea, oral mucosa, esophagus, intestine, kidney collecting ducts, ureter, bladder, urethra and thymus but is absent in lung, blood vessels, skeletal muscle and nerves.

It is found in the cell junction. Its subcellular location is the hemidesmosome. It localises to the membrane. The protein resides in the secreted. The protein localises to the extracellular space. It is found in the extracellular matrix. Its subcellular location is the basement membrane. Its function is as follows. May play a role in the integrity of hemidesmosome and the attachment of basal keratinocytes to the underlying basement membrane. Functionally, the 120 kDa linear IgA disease antigen is an anchoring filament component involved in dermal-epidermal cohesion. Is the target of linear IgA bullous dermatosis autoantibodies. The polypeptide is Collagen alpha-1(XVII) chain (COL17A1) (Homo sapiens (Human)).